Reading from the N-terminus, the 330-residue chain is MIWTGLLVGFLFGIVLQRGRICFNSAFRDVLLFKDNYLFKLAVFTLALEMILFVLLSQVGLMQMNPKPLNLVGNIIGGFVFGLGMVLAGGCASGVTYRVGEGLTTAWFAALFYGLGAYATKSGAFSWWLSWVGQFKSPLSVEESAYYVKGAGPTISSVLGLNPWIPALVIAALFILWAFGTKTTSRETKFNWKIASVCLALVAGLGFITSTLSGRKYGLGITGGWINLFQGFLTNSPLNWEGLEIVGIILGAGVAAAVAGEFKLRMPKNPVTYLQVGIGGLLMGIGAVTAGGCNIGHFLTGVPQLALSSWLASIFFILGNWTMAWILFRR.

At 1–2 (MI) the chain is on the periplasmic side. Residues 3–18 (WTGLLVGFLFGIVLQR) traverse the membrane as a helical segment. The Cytoplasmic portion of the chain corresponds to 19–36 (GRICFNSAFRDVLLFKDN). A helical transmembrane segment spans residues 37-59 (YLFKLAVFTLALEMILFVLLSQV). Residues 60-70 (GLMQMNPKPLN) lie on the Periplasmic side of the membrane. The chain crosses the membrane as a helical span at residues 71 to 87 (LVGNIIGGFVFGLGMVL). Topologically, residues 88–102 (AGGCASGVTYRVGEG) are cytoplasmic. A helical membrane pass occupies residues 103–121 (LTTAWFAALFYGLGAYATK). Residues 122–162 (SGAFSWWLSWVGQFKSPLSVEESAYYVKGAGPTISSVLGLN) lie on the Periplasmic side of the membrane. Residues 163–180 (PWIPALVIAALFILWAFG) form a helical membrane-spanning segment. Residues 181 to 189 (TKTTSRETK) lie on the Cytoplasmic side of the membrane. Residues 190–211 (FNWKIASVCLALVAGLGFITST) traverse the membrane as a helical segment. Residues 212–239 (LSGRKYGLGITGGWINLFQGFLTNSPLN) lie on the Periplasmic side of the membrane. Residues 240–258 (WEGLEIVGIILGAGVAAAV) form a helical membrane-spanning segment. Residues 259–269 (AGEFKLRMPKN) lie on the Cytoplasmic side of the membrane. Residues 270–289 (PVTYLQVGIGGLLMGIGAVT) form a helical membrane-spanning segment. The Periplasmic segment spans residues 290 to 306 (AGGCNIGHFLTGVPQLA). A helical membrane pass occupies residues 307–326 (LSSWLASIFFILGNWTMAWI). Over 327 to 330 (LFRR) the chain is Cytoplasmic.

The protein belongs to the TsuA/YedE (TC 9.B.102) family.

The protein resides in the cell inner membrane. The catalysed reaction is thiosulfate(in) = thiosulfate(out). Functionally, mediates thiosulfate uptake. The chain is Thiosulfate transporter TsuA from Spirochaeta thermophila (strain ATCC 700085 / DSM 6578 / Z-1203).